Reading from the N-terminus, the 152-residue chain is Putative NrdI-like protein (152 aa).

It belongs to the NrdI family.

The polypeptide is Putative NrdI-like protein (Streptococcus pyogenes serotype M18 (strain MGAS8232)).